A 144-amino-acid chain; its full sequence is Large ribosomal subunit protein uL11 (144 aa).

This sequence belongs to the universal ribosomal protein uL11 family. In terms of assembly, part of the ribosomal stalk of the 50S ribosomal subunit. Interacts with L10 and the large rRNA to form the base of the stalk. L10 forms an elongated spine to which L12 dimers bind in a sequential fashion forming a multimeric L10(L12)X complex. In terms of processing, one or more lysine residues are methylated.

Its function is as follows. Forms part of the ribosomal stalk which helps the ribosome interact with GTP-bound translation factors. In Francisella tularensis subsp. mediasiatica (strain FSC147), this protein is Large ribosomal subunit protein uL11.